The following is a 661-amino-acid chain: Transmembrane and coiled-coil domain-containing protein STS1 (661 aa).

Disordered regions lie at residues 34–71 (AHHHHDDDDEEQGRTSTSSGGGGGSSSSSSNSGAGADA) and 154–185 (VGNTIKGGDQDALPSSSGTDKSPGESSHDDQL). Residues 59–69 (SSSSSNSGAGA) show a composition bias toward low complexity. Positions 175 to 184 (SPGESSHDDQ) are enriched in basic and acidic residues. The next 4 membrane-spanning stretches (helical) occupy residues 306-326 (ALLAITGGLAAPAIAAGFGAL), 333-353 (LVPVIGASGFAAMATAAGSVA), 355-375 (SVAVAASFGAAGAGLTGSKMA), and 466-486 (LSGLLAAFAWPATLLAATDFI).

It belongs to the TMCO4 family. In terms of assembly, interacts with PKS10/PKS2 and 4CLL9/ACOS12.

Its subcellular location is the endoplasmic reticulum membrane. Its function is as follows. Involved in anther lipids biosynthesis and is required for tapetum degradation and pollen wall formation. Required for the formation of Ubisch bodies and microspores. Possesses lipase activity in vitro toward two synthetic substrates, p-nitrophenyl acetate (pNPA) and p-nitrophenyl butyrate (pNPB). This Oryza sativa subsp. japonica (Rice) protein is Transmembrane and coiled-coil domain-containing protein STS1.